Here is a 313-residue protein sequence, read N- to C-terminus: Homeobox protein CDX-2 (313 aa).

The residue at position 60 (serine 60) is a Phosphoserine. A disordered region spans residues 113–153 (HAHHHPHHHPHHPAAAPSCASGLLQTLNPGPPGPAATGAAE). Basic residues predominate over residues 114-124 (AHHHPHHHPHH). The interaction with DNA stretch occupies residues 185–215 (KDKYRVVYTDHQRLELEKEFHYSRYITIRRK). The segment at residues 185–244 (KDKYRVVYTDHQRLELEKEFHYSRYITIRRKAELAATLGLSERQVKIWFQNRRAKERKIN) is a DNA-binding region (homeobox). The tract at residues 227–241 (RQVKIWFQNRRAKER) is interaction with 5-mCpG DNA. The segment at 242-313 (KINKKKLQQQ…GGVLNPTVTQ (72 aa)) is disordered. Low complexity-rich tracts occupy residues 249–261 (QQQQ…QQLA) and 271–300 (QPGS…PGVL). Position 283 is a phosphoserine (serine 283). The 4S motif; modulates transactivation activity and protein stability signature appears at 283–295 (SPVSSLQGSVPGS).

Belongs to the Caudal homeobox family. Can bind DNA as a monomer or homodimer. In terms of processing, ubiquitinated, leading to its degradation by the proteasome. Phosphorylation at Ser-60 reduces transactivation capacity. Phosphorylation at Ser-283 reduces transactivation capacity and also increases ubiquitin-dependent proteasome degradation. In terms of tissue distribution, expressed in the intestine.

The protein resides in the nucleus. Functionally, transcription factor which regulates the transcription of multiple genes expressed in the intestinal epithelium. Binds to the promoter of the intestinal sucrase-isomaltase SI and activates SI transcription. Binds to the DNA sequence 5'-ATAAAAACTTAT-3' in the promoter region of VDR and activates VDR transcription. Binds to and activates transcription of LPH. Activates transcription of CLDN2 and intestinal mucin MUC2. Binds to the 5'-AATTTTTTACAACACCT-3' DNA sequence in the promoter region of CA1 and activates CA1 transcription. Important in broad range of functions from early differentiation to maintenance of the intestinal epithelial lining of both the small and large intestine. Binds preferentially to methylated DNA. The sequence is that of Homeobox protein CDX-2 (CDX2) from Mesocricetus auratus (Golden hamster).